The primary structure comprises 398 residues: Elongation factor Tu (398 aa).

In terms of domain architecture, tr-type G spans 10-208 (KPHVNVGTIG…ALDDYIPEPE (199 aa)). A G1 region spans residues 19-26 (GHVDHGKT). Residue 19–26 (GHVDHGKT) participates in GTP binding. Residue T26 coordinates Mg(2+). Residues 61-65 (GITIA) are G2. Positions 82-85 (DCPG) are G3. GTP is bound by residues 82-86 (DCPGH) and 137-140 (NKAD). Residues 137-140 (NKAD) are G4. The tract at residues 175 to 177 (SAL) is G5.

Belongs to the TRAFAC class translation factor GTPase superfamily. Classic translation factor GTPase family. EF-Tu/EF-1A subfamily. In terms of assembly, monomer.

It is found in the cytoplasm. It carries out the reaction GTP + H2O = GDP + phosphate + H(+). GTP hydrolase that promotes the GTP-dependent binding of aminoacyl-tRNA to the A-site of ribosomes during protein biosynthesis. This is Elongation factor Tu from Marinobacter nauticus (strain ATCC 700491 / DSM 11845 / VT8) (Marinobacter aquaeolei).